Here is a 175-residue protein sequence, read N- to C-terminus: RNA pyrophosphohydrolase (175 aa).

A Nudix hydrolase domain is found at 6-149 (GYRPNVGIIL…KRQVYQQALT (144 aa)). The Nudix box signature appears at 38-59 (GGIKHGESPEQAMYRELYEEVG).

Belongs to the Nudix hydrolase family. RppH subfamily. A divalent metal cation serves as cofactor.

In terms of biological role, accelerates the degradation of transcripts by removing pyrophosphate from the 5'-end of triphosphorylated RNA, leading to a more labile monophosphorylated state that can stimulate subsequent ribonuclease cleavage. In Azoarcus sp. (strain BH72), this protein is RNA pyrophosphohydrolase.